A 281-amino-acid chain; its full sequence is 2,3,4,5-tetrahydropyridine-2,6-dicarboxylate N-succinyltransferase (281 aa).

The protein belongs to the transferase hexapeptide repeat family.

The protein resides in the cytoplasm. It catalyses the reaction (S)-2,3,4,5-tetrahydrodipicolinate + succinyl-CoA + H2O = (S)-2-succinylamino-6-oxoheptanedioate + CoA. The protein operates within amino-acid biosynthesis; L-lysine biosynthesis via DAP pathway; LL-2,6-diaminopimelate from (S)-tetrahydrodipicolinate (succinylase route): step 1/3. The chain is 2,3,4,5-tetrahydropyridine-2,6-dicarboxylate N-succinyltransferase from Afipia carboxidovorans (strain ATCC 49405 / DSM 1227 / KCTC 32145 / OM5) (Oligotropha carboxidovorans).